We begin with the raw amino-acid sequence, 500 residues long: Probable cytosol aminopeptidase (500 aa).

Residues K265 and D270 each contribute to the Mn(2+) site. K277 is an active-site residue. Mn(2+) is bound by residues D288, D347, and E349. R351 is a catalytic residue.

This sequence belongs to the peptidase M17 family. Mn(2+) serves as cofactor.

The protein resides in the cytoplasm. It carries out the reaction Release of an N-terminal amino acid, Xaa-|-Yaa-, in which Xaa is preferably Leu, but may be other amino acids including Pro although not Arg or Lys, and Yaa may be Pro. Amino acid amides and methyl esters are also readily hydrolyzed, but rates on arylamides are exceedingly low.. It catalyses the reaction Release of an N-terminal amino acid, preferentially leucine, but not glutamic or aspartic acids.. Presumably involved in the processing and regular turnover of intracellular proteins. Catalyzes the removal of unsubstituted N-terminal amino acids from various peptides. This Rickettsia africae (strain ESF-5) protein is Probable cytosol aminopeptidase.